The following is a 391-amino-acid chain: Phosphoglycerate kinase (391 aa).

Substrate-binding positions include 16 to 18, Arg31, 54 to 57, Arg108, and Arg141; these read DLN and HLGR. ATP-binding positions include Lys192, Glu314, and 340–343; that span reads GGDT.

The protein belongs to the phosphoglycerate kinase family. Monomer.

The protein resides in the cytoplasm. The catalysed reaction is (2R)-3-phosphoglycerate + ATP = (2R)-3-phospho-glyceroyl phosphate + ADP. It functions in the pathway carbohydrate degradation; glycolysis; pyruvate from D-glyceraldehyde 3-phosphate: step 2/5. The chain is Phosphoglycerate kinase from Coxiella burnetii (strain RSA 493 / Nine Mile phase I).